A 592-amino-acid chain; its full sequence is Hepatocyte nuclear factor 1-alpha-B (592 aa).

The segment at 1 to 31 is dimerization; the sequence is MASQLSYLQQELLRALLESGVTKEALKKALA. The 32-residue stretch at 1–32 folds into the HNF-p1 domain; it reads MASQLSYLQQELLRALLESGVTKEALKKALAD. Residues 54–78 form a disordered region; that stretch reads NCVQLPNGLGEPQMSEDESSDDGGD. The segment covering 67–77 has biased composition (acidic residues); the sequence is MSEDESSDDGG. A POU-specific atypical domain is found at 85–180; sequence KELERLSPEE…IARQFTHAGH (96 aa). Interaction with DNA regions lie at residues 128–130, 141–147, 153–156, 201–204, 261–263, and 268–271; these read QRE, HLSQHLN, KTQK, RFKW, RVY, and NSGK. Positions 195–203 match the Nuclear localization signal motif; that stretch reads KKMRRNRFK. Residues 197–277 constitute a DNA-binding region (homeobox; HNF1-type); sequence MRRNRFKWGP…NSGKEEAFRH (81 aa). 2 stretches are compositionally biased toward polar residues: residues 284-295 and 306-328; these read YNGQQSSAQPLS and RYTQ…TLSP. Disordered stretches follow at residues 284–329 and 511–533; these read YNGQ…LSPS and KQVV…HNQD.

It belongs to the HNF1 homeobox family. Binds DNA as dimer. Forms a homodimer or heterodimer with HNF1-alpha-A. Potentially also form a heterodimer with HNF1-beta. In terms of tissue distribution, liver.

The protein resides in the nucleus. Transcriptional activator that regulates the tissue specific expression of multiple genes, especially in pancreas and liver. Binds to the hepatocyte specific promoter element HP1. Binds to the inverted palindrome 5'-GTTAATNATTAAC-3'. The chain is Hepatocyte nuclear factor 1-alpha-B (hnf1a-b) from Xenopus laevis (African clawed frog).